A 155-amino-acid chain; its full sequence is HTH-type transcriptional repressor MdtR (155 aa).

Positions Ala4–Gln140 constitute an HTH marR-type domain. Positions Val54–Gln77 form a DNA-binding region, H-T-H motif.

In terms of assembly, homodimer.

It localises to the cytoplasm. With respect to regulation, the binding of MdtR to the mdtRP promoter region is severely inhibited by adding excess concentrations of fusidic acid or novobiocin but not by actinomycin or streptomycin. Repressor of the multidrug resistance operon mdtRP. Acts by binding directly to the mdtRP promoter region, leading to the repression of its expression. The chain is HTH-type transcriptional repressor MdtR from Bacillus subtilis (strain 168).